The sequence spans 394 residues: MKTQVAIIGAGPSGLLLGQLLHKAGIDNVILERQTPDYVLGRIRAGVLEQGMVDLLREAGVDRRMARDGLVHEGVEIAFAGQRRRIDLKRLSGGKTVTVYGQTEVTRDLMEAREACGATTVYQAAEVRLHDLQGERPYVTFERDGERLRLDCDYIAGCDGFHGISRQSIPAERLKVFERVYPFGWLGLLADTPPVSHELIYANHPRGFALCSQRSATRSRYYVQVPLSEKVEDWSDERFWTELKARLPSEVAEKLVTGPSLEKSIAPLRSFVVEPMQHGRLFLAGDAAHIVPPTGAKGLNLAASDVSTLYRLLLKAYREGRGELLERYSAICLRRIWKAERFSWWMTSVLHRFPDTDAFSQRIQQTELEYYLGSEAGLATIAENYVGLPYEEIE.

FAD is bound by residues Ser-13, Glu-32, 42–47 (RIRAGV), and Gln-102. Residues Tyr-201, 212-214 (SQR), and Tyr-222 contribute to the substrate site. Position 286 (Asp-286) interacts with FAD. Pro-293 contributes to the substrate binding site. 299-300 (LN) serves as a coordination point for FAD.

Belongs to the aromatic-ring hydroxylase family. As to quaternary structure, homodimer. FAD serves as cofactor.

It carries out the reaction 4-hydroxybenzoate + NADPH + O2 + H(+) = 3,4-dihydroxybenzoate + NADP(+) + H2O. The protein operates within aromatic compound metabolism; benzoate degradation via hydroxylation; 3,4-dihydroxybenzoate from benzoate: step 2/2. Functionally, catalyzes the incorporation of an atom of dioxygen into p-hydroxybenzoate (p-OHB) to form 3,4-dihydroxybenzoate (3,4DOHB). The reaction occurs in two parts: reduction of the flavin adenine dinucleotide (FAD) in the enzyme by reduced nicotinamide adenine dinucleotide phosphate (NADPH) in response to binding p-hydroxybenzoate to the enzyme and oxidation of reduced FAD with oxygen to form a hydroperoxide, which then oxygenates p-hydroxybenzoate. This Pseudomonas aeruginosa (strain ATCC 15692 / DSM 22644 / CIP 104116 / JCM 14847 / LMG 12228 / 1C / PRS 101 / PAO1) protein is p-hydroxybenzoate hydroxylase.